The sequence spans 1415 residues: DNA-directed RNA polymerase subunit beta'' (1415 aa).

Zn(2+) is bound by residues cysteine 217, cysteine 291, cysteine 298, and cysteine 301.

This sequence belongs to the RNA polymerase beta' chain family. RpoC2 subfamily. In plastids the minimal PEP RNA polymerase catalytic core is composed of four subunits: alpha, beta, beta', and beta''. When a (nuclear-encoded) sigma factor is associated with the core the holoenzyme is formed, which can initiate transcription. Zn(2+) is required as a cofactor.

The protein localises to the plastid. Its subcellular location is the chloroplast. The catalysed reaction is RNA(n) + a ribonucleoside 5'-triphosphate = RNA(n+1) + diphosphate. Functionally, DNA-dependent RNA polymerase catalyzes the transcription of DNA into RNA using the four ribonucleoside triphosphates as substrates. The protein is DNA-directed RNA polymerase subunit beta'' of Phaeodactylum tricornutum (strain CCAP 1055/1).